The sequence spans 98 residues: NADH-ubiquinone oxidoreductase chain 4L (98 aa).

3 consecutive transmembrane segments (helical) span residues 1 to 21 (MPSI…GMLI), 29 to 49 (SLLC…LTAL), and 61 to 81 (IVLL…LVMV).

It belongs to the complex I subunit 4L family. As to quaternary structure, core subunit of respiratory chain NADH dehydrogenase (Complex I) which is composed of 45 different subunits.

Its subcellular location is the mitochondrion inner membrane. It carries out the reaction a ubiquinone + NADH + 5 H(+)(in) = a ubiquinol + NAD(+) + 4 H(+)(out). In terms of biological role, core subunit of the mitochondrial membrane respiratory chain NADH dehydrogenase (Complex I) which catalyzes electron transfer from NADH through the respiratory chain, using ubiquinone as an electron acceptor. Part of the enzyme membrane arm which is embedded in the lipid bilayer and involved in proton translocation. The sequence is that of NADH-ubiquinone oxidoreductase chain 4L (MT-ND4L) from Lepus europaeus (European hare).